The sequence spans 201 residues: Probable chemoreceptor glutamine deamidase CheD 1 (201 aa).

This sequence belongs to the CheD family.

The catalysed reaction is L-glutaminyl-[protein] + H2O = L-glutamyl-[protein] + NH4(+). In terms of biological role, probably deamidates glutamine residues to glutamate on methyl-accepting chemotaxis receptors (MCPs), playing an important role in chemotaxis. The polypeptide is Probable chemoreceptor glutamine deamidase CheD 1 (Dechloromonas aromatica (strain RCB)).